Reading from the N-terminus, the 327-residue chain is tRNA(Ile)-lysidine synthase (327 aa).

32-37 is an ATP binding site; sequence SGGQDS.

The protein belongs to the tRNA(Ile)-lysidine synthase family.

Its subcellular location is the cytoplasm. The enzyme catalyses cytidine(34) in tRNA(Ile2) + L-lysine + ATP = lysidine(34) in tRNA(Ile2) + AMP + diphosphate + H(+). Ligates lysine onto the cytidine present at position 34 of the AUA codon-specific tRNA(Ile) that contains the anticodon CAU, in an ATP-dependent manner. Cytidine is converted to lysidine, thus changing the amino acid specificity of the tRNA from methionine to isoleucine. The polypeptide is tRNA(Ile)-lysidine synthase (Synechococcus sp. (strain JA-2-3B'a(2-13)) (Cyanobacteria bacterium Yellowstone B-Prime)).